The chain runs to 615 residues: 9-cis-epoxycarotenoid dioxygenase NCED1, chloroplastic (615 aa).

Residues 1–41 (MPSPASNTWINTTLPSSCSSPFKDLASTSSSPTTLLPFKKR) constitute a chloroplast transit peptide. Disordered regions lie at residues 20–45 (SPFKDLASTSSSPTTLLPFKKRSSSN) and 62–101 (YQPTSTSTTTTPTPIKPTTTTTTTTPHRETKPLSDTKQPF). Low complexity-rich tracts occupy residues 27–37 (STSSSPTTLLP) and 64–86 (PTSTSTTTTPTPIKPTTTTTTTT). 3 residues coordinate Fe cation: His316, His365, and His430. Residues 571 to 592 (KEWKSELQIVNAQNLKLEASIK) adopt a coiled-coil conformation. His602 contacts Fe cation.

Belongs to the carotenoid oxygenase family. The cofactor is Fe(2+).

The protein localises to the plastid. It localises to the chloroplast thylakoid membrane. The enzyme catalyses a 9-cis-epoxycarotenoid + O2 = a 12'-apo-carotenal + 2-cis,4-trans-xanthoxin. It carries out the reaction 9-cis-violaxanthin + O2 = (3S,5R,6S)-5,6-epoxy-3-hydroxy-5,6-dihydro-12'-apo-beta-caroten-12'-al + 2-cis,4-trans-xanthoxin. The catalysed reaction is 9'-cis-neoxanthin + O2 = (3S,5R,6R)-3,5-dihydroxy-6,7-didehydro-5,6-dihydro-12'-apo-beta-caroten-12'-al + 2-cis,4-trans-xanthoxin. In terms of biological role, has a 11,12(11',12') 9-cis epoxycarotenoid cleavage activity. Catalyzes the first step of abscisic-acid biosynthesis from carotenoids, in response to water stress. Active on 9-cis-violaxanthin and 9'-cis-neoxanthin, but not on the all-trans isomers of violaxanthin and neoxanthin. This is 9-cis-epoxycarotenoid dioxygenase NCED1, chloroplastic (NCED1) from Phaseolus vulgaris (Kidney bean).